The following is a 397-amino-acid chain: Acetate kinase 2 (397 aa).

Asparagine 8 serves as a coordination point for Mg(2+). Lysine 15 provides a ligand contact to ATP. Arginine 89 is a substrate binding site. The Proton donor/acceptor role is filled by aspartate 146. Residues 206 to 210, 281 to 283, and 329 to 333 contribute to the ATP site; these read HLGNG, DLR, and GIGEN. A Mg(2+)-binding site is contributed by glutamate 382.

The protein belongs to the acetokinase family. Homodimer. Mg(2+) serves as cofactor. The cofactor is Mn(2+).

Its subcellular location is the cytoplasm. It carries out the reaction acetate + ATP = acetyl phosphate + ADP. It functions in the pathway metabolic intermediate biosynthesis; acetyl-CoA biosynthesis; acetyl-CoA from acetate: step 1/2. Catalyzes the formation of acetyl phosphate from acetate and ATP. Can also catalyze the reverse reaction. In Listeria monocytogenes serotype 4b (strain F2365), this protein is Acetate kinase 2.